The sequence spans 511 residues: Cytochrome P450 93B2 (511 aa).

Residues 4–24 (LQLIFLLFFFPTLLFLYCLPY) traverse the membrane as a helical segment. Cys447 lines the heme pocket.

The protein belongs to the cytochrome P450 family. It depends on heme as a cofactor.

Its subcellular location is the membrane. It catalyses the reaction a flavanone + reduced [NADPH--hemoprotein reductase] + O2 = a flavone + oxidized [NADPH--hemoprotein reductase] + 2 H2O + H(+). Its pathway is secondary metabolite biosynthesis; flavonoid biosynthesis. Its function is as follows. Functions as a flavone synthase II (FNSII) that catalyzes the direct conversion of flavanones to flavones. In vitro, can convert liquiritigenin, naringenin and eriodictyol to 7,4'-dihydroxyflavone, apigenin and luteolin, respectively. The sequence is that of Cytochrome P450 93B2 from Gerbera hybrida (Daisy).